The primary structure comprises 146 residues: Hemoglobin subunit beta (146 aa).

Valine 1 bears the N-acetylvaline mark. Residues 2–146 enclose the Globin domain; sequence HLTAEEKSLV…VANALAHKYH (145 aa). The residue at position 44 (serine 44) is a Phosphoserine. Residue lysine 59 is modified to N6-acetyllysine. Histidine 63 provides a ligand contact to heme b. Lysine 82 is subject to N6-acetyllysine. Histidine 92 lines the heme b pocket. Cysteine 93 bears the S-nitrosocysteine mark. Lysine 144 carries the N6-acetyllysine modification.

It belongs to the globin family. In terms of assembly, heterotetramer of two alpha chains and two beta chains. Red blood cells.

Functionally, involved in oxygen transport from the lung to the various peripheral tissues. The chain is Hemoglobin subunit beta (HBB) from Canis latrans (Coyote).